The sequence spans 246 residues: NAD-dependent protein deacetylase (246 aa).

Residues 1-246 enclose the Deacetylase sirtuin-type domain; the sequence is MKKPDIQQLK…VIEEIVNSNS (246 aa). Residues Ala25, Phe36, Arg37, Gln106, Ile108, Asp109, and His124 each coordinate NAD(+). Phe36 contacts nicotinamide. Positions 108 and 109 each coordinate nicotinamide. His124 (proton acceptor) is an active-site residue. Zn(2+) contacts are provided by Cys132, Cys135, Cys152, and Cys155. NAD(+)-binding residues include Ser193, Ser194, Asn216, and Asp233.

The protein belongs to the sirtuin family. Class U subfamily. Requires Zn(2+) as cofactor.

The protein resides in the cytoplasm. The enzyme catalyses N(6)-acetyl-L-lysyl-[protein] + NAD(+) + H2O = 2''-O-acetyl-ADP-D-ribose + nicotinamide + L-lysyl-[protein]. In terms of biological role, NAD-dependent protein deacetylase which modulates the activities of several enzymes which are inactive in their acetylated form. This chain is NAD-dependent protein deacetylase, found in Staphylococcus epidermidis (strain ATCC 12228 / FDA PCI 1200).